We begin with the raw amino-acid sequence, 308 residues long: Ribonuclease Z (308 aa).

7 residues coordinate Zn(2+): histidine 61, histidine 63, aspartate 65, histidine 66, histidine 139, aspartate 210, and histidine 268. Aspartate 65 serves as the catalytic Proton acceptor.

It belongs to the RNase Z family. In terms of assembly, homodimer. Zn(2+) is required as a cofactor.

It catalyses the reaction Endonucleolytic cleavage of RNA, removing extra 3' nucleotides from tRNA precursor, generating 3' termini of tRNAs. A 3'-hydroxy group is left at the tRNA terminus and a 5'-phosphoryl group is left at the trailer molecule.. In terms of biological role, zinc phosphodiesterase, which displays some tRNA 3'-processing endonuclease activity. Probably involved in tRNA maturation, by removing a 3'-trailer from precursor tRNA. The sequence is that of Ribonuclease Z from Natronomonas pharaonis (strain ATCC 35678 / DSM 2160 / CIP 103997 / JCM 8858 / NBRC 14720 / NCIMB 2260 / Gabara) (Halobacterium pharaonis).